A 1128-amino-acid chain; its full sequence is Nck-associated protein 1 (1128 aa).

Position 2 is an N-acetylserine (S2). Residues 640–665 are disordered; the sequence is AVNKKSKKQTGKKGEPEREKPGVESM. Residues 651–665 are compositionally biased toward basic and acidic residues; the sequence is KKGEPEREKPGVESM. A helical membrane pass occupies residues 995 to 1015; sequence IACLLMVFVAVSLPTLASNVM.

This sequence belongs to the HEM-1/HEM-2 family. Component of the WAVE1 complex composed of ABI2, CYFIP1 or CYFIP2, BRK1, NCKAP1 and WASF1/WAVE1. Within the complex, a heterodimer containing NCKAP1 and CYFIP1 interacts with a heterotrimer formed by WAVE1, ABI2 and BRK1. Component of the WAVE2 complex composed of ABI1, CYFIP1/SRA1, NCKAP1/NAP1 and WASF2/WAVE2. CYFIP2 binds to activated RAC1 which causes the complex to dissociate, releasing activated WASF1. The complex can also be activated by NCK1. Associates preferentially with the first SH3 domain of NCK. Interacts with NYAP1, NYAP2 and MYO16. Interacts with TMEM132D. In terms of assembly, (Microbial infection) Interacts with human cytomegalovirus protein UL135. Expressed in all tissues examined except peripheral blood leukocytes, with highest expression in brain, heart, and skeletal muscle. Expressed in cells of various brain regions including Purkinje cells and dentate nucleus of the cerebellum, CA4 region and dentate gyrus of the hippocampus, and in frontal gray and white matter.

The protein resides in the cell membrane. It localises to the cell projection. The protein localises to the lamellipodium membrane. In terms of biological role, part of the WAVE complex that regulates lamellipodia formation. The WAVE complex regulates actin filament reorganization via its interaction with the Arp2/3 complex. Actin remodeling activity is regulated by RAC1. As component of the WAVE1 complex, required for BDNF-NTRK2 endocytic trafficking and signaling from early endosomes. This chain is Nck-associated protein 1 (NCKAP1), found in Homo sapiens (Human).